The following is a 99-amino-acid chain: uncharacterized protein (99 aa).

The chain crosses the membrane as a helical span at residues 10-29 (ELSVHTGTVTHTIFVYVFLG).

It is found in the membrane. This is an uncharacterized protein from Schizosaccharomyces pombe (strain 972 / ATCC 24843) (Fission yeast).